Consider the following 551-residue polypeptide: Frizzled-2 (551 aa).

Positions 1–26 (MQGVTRASILLIIYHLFTLSLGQLHG) are cleaved as a signal peptide. Over 27–231 (EKGISVPEHG…FSQDEIRFAR (205 aa)) the chain is Extracellular. One can recognise an FZ domain in the interval 33–152 (PEHGFCQPIS…HGAEQICVGQ (120 aa)). Cystine bridges form between Cys-38-Cys-99, Cys-46-Cys-92, Cys-83-Cys-120, Cys-109-Cys-149, and Cys-113-Cys-137. Asn-52 is a glycosylation site (N-linked (GlcNAc...) asparagine). The N-linked (GlcNAc...) asparagine glycan is linked to Asn-153. A helical membrane pass occupies residues 232–252 (IWILIWSVLCCASTFITVTTY). The Cytoplasmic portion of the chain corresponds to 253–265 (LVDMQRFRYPERP). A helical transmembrane segment spans residues 266 to 286 (IIFLSGCYTMVSVAYIAGFVL). Residues 287–313 (GDKVVCNEGFSEDGYKTVVQGTKKEGC) are Extracellular-facing. A helical membrane pass occupies residues 314 to 334 (TILFMMLYFFSMASSIWWVIL). At 335–356 (SLTWFLAAGMKWGHEAIEANSQ) the chain is on the cytoplasmic side. A helical membrane pass occupies residues 357-377 (YFHLAAWAVPAVKTITILAMG). At 378-400 (QIDGDLLSGVCFVGLNNIDPLRG) the chain is on the extracellular side. The helical transmembrane segment at 401-421 (FVLAPLFVYLFIGTSFLLAGF) threads the bilayer. The Cytoplasmic portion of the chain corresponds to 422–447 (VSLFRIRTIMKHDGTKTEKLERLMVR). The helical transmembrane segment at 448 to 468 (IGVFSVLYTVPATIVIACYFY) threads the bilayer. At 469 to 505 (EQAFREHWERSWVSQNCKSLAIPCPLQYTPRMTPDFT) the chain is on the extracellular side. The chain crosses the membrane as a helical span at residues 506–526 (VYMIKYLMTLIVGITSGFWIW). At 527 to 534 (SGKTLHSW) the chain is on the cytoplasmic side. Positions 529 to 534 (KTLHSW) match the Lys-Thr-X-X-X-Trp motif, mediates interaction with the PDZ domain of Dvl family members motif. The PDZ-binding motif lies at 549–551 (TTV).

Belongs to the G-protein coupled receptor Fz/Smo family. In terms of tissue distribution, widely expressed, especially in the eye anlage, otic vesicle and developing somites.

The protein localises to the membrane. It localises to the cell membrane. Receptor for Wnt proteins. Most of frizzled receptors are coupled to the beta-catenin canonical signaling pathway, which leads to the activation of disheveled proteins, inhibition of GSK-3 kinase, nuclear accumulation of beta-catenin and activation of Wnt target genes. A second signaling pathway involving PKC and calcium fluxes has been seen for some family members, but it is not yet clear if it represents a distinct pathway or if it can be integrated in the canonical pathway, as PKC seems to be required for Wnt-mediated inactivation of GSK-3 kinase. Both pathways seem to involve interactions with G-proteins. May be involved in transduction and intercellular transmission of polarity information during tissue morphogenesis and/or in differentiated tissues. The sequence is that of Frizzled-2 (fzd2) from Xenopus laevis (African clawed frog).